The primary structure comprises 745 residues: Junction plakoglobin (745 aa).

Methionine 1 is subject to N-acetylmethionine. Residue threonine 14 is glycosylated (O-linked (GlcNAc) threonine). A phosphoserine mark is found at serine 99 and serine 125. ARM repeat units follow at residues 132–171, 172–215, 216–255, 258–297, 298–341, 342–381, 383–420, 423–464, 470–510, 512–551, 574–613, and 615–661; these read NYQD…QLSK, KEAS…LSHH, REGL…NLLL, EGAK…LLAY, GNQE…LSVC, PSNK…NLSD, ATKQ…NLTC, SKNK…HLTS, EMAQ…NLAL, PANH…QPYT, PMNR…ELAQ, and KEAA…PDYR. The interaction with DSC1 and DSG1 stretch occupies residues 132–297; the sequence is NYQDDAELAT…TTDCLQLLAY (166 aa). Serine 182 bears the Phosphoserine mark. The interaction with DSC1 stretch occupies residues 574 to 661; sequence PMNRMEIFRL…ISEDKNPDYR (88 aa). Residues serine 665 and serine 730 each carry the phosphoserine modification.

The protein belongs to the beta-catenin family. Homodimer. Component of an E-cadherin/catenin adhesion complex composed of at least E-cadherin/CDH1 and gamma-catenin/JUP, and possibly alpha-catenin/CTNNA1; the complex is located to adherens junctions. The stable association of CTNNA1 is controversial as CTNNA1 was shown not to bind to F-actin when assembled in the complex. Interacts with MUC1. Interacts with CAV1. Interacts with PTPRJ. Interacts with DSG1. Interacts with DSC1 and DSC2. Interacts with PKP2. Interacts with PKP3 (via N-terminus); the interaction is required for PKP3 localization to desmosome cell-cell junctions. Interacts with DSG4. In terms of processing, may be phosphorylated by FER.

The protein resides in the cell junction. It is found in the adherens junction. Its subcellular location is the desmosome. It localises to the cytoplasm. The protein localises to the cytoskeleton. The protein resides in the cell membrane. It is found in the nucleus. Common junctional plaque protein. The membrane-associated plaques are architectural elements in an important strategic position to influence the arrangement and function of both the cytoskeleton and the cells within the tissue. The presence of plakoglobin in both the desmosomes and in the intermediate junctions suggests that it plays a central role in the structure and function of submembranous plaques. Acts as a substrate for VE-PTP and is required by it to stimulate VE-cadherin function in endothelial cells. Can replace beta-catenin in E-cadherin/catenin adhesion complexes which are proposed to couple cadherins to the actin cytoskeleton. This chain is Junction plakoglobin, found in Sus scrofa (Pig).